Consider the following 1451-residue polypeptide: MAREIHKIASLRRESSLWRRGDDGVYFSRSSTGASSSRFRDEEDDEEALRWAALERLPTRDRVRRGILLQAAEGNGEKVEVDVGRMGARESRALIARLIRAADDDHALFLLKLKDRMDRVGIDYPTIEVRFEKLEVEAEVHVGNRGLPTLLNSIINTVQAIGNALHISPTRKQPMTVLHDVSGIIKPRRMTLLLGPPGSGKTTLLLALAGKLEDNLKVSGKVTYNGHGMDEFVPQRTAAYISQHDLHIGEMTVRETLAFSARCQGVGSRYDMLTELSRREKAENIKPDQDIDVYMKASAIGGQESSVVTEYILKILGLDICADTVVGNDMLRGVSGGQRKRVTTGEMLVGPARALFMDEISTGLDSSTTYQIVNSIGQTIRILGGTAVISLLQPAPETYNLFDDIILLSDGQIVYQGAREHVLEFFELMGFRCPQRKGVADFLQEVTSKKDQEQYWYRNDIPYSFVPVKQFADAFRSFHVGQSIQNELSEPFDRSRSHPASLATSKFGVSWMALLKANIDRELLLMKRNSFVYIFKAANLTLTAFLVMTTFLRTKMRHDTTYGTIYMGALYFALDTIMFNGFAELGMTVMKLPVFFKQRDLLFFPAWTYTIPSWILQIPVTFFEVGVYVFTTYYVVGFDPNVSRFFKQYLLLVALNQMSSSLFRFIAGIGRDMVVSQTFGPLSLLAFTALGGFILARPDVKKWWIWGYWISPLSYAQNAISTNEFLGRSWNKSFPGQNDTVGISILKSRGIFTEAKWYWIGFGALIGYTLLFNLLYTVALSFLKPLGDSYPSVPEDALKEKRANQTGEILDSCEEKKSRKKEQSQSVNQKHWNNTAESSQIRQGILPFAQLSLSFNDIKYSVDMPEAMTAQGVTEERLLLLKGVSGSFRPGVLTALMGVSGAGKTTLMDVLAGRKTGGYIEGDITISGYPKKQETFARISGYCEQNDIHSPHVTVYESLVFSAWMRLPSEVDSETRKMFIEEVMELVELTSLRGALVGLPGVNGLSTEQRKRLTVAVELVANPSIIFMDEPTSGLDARAAAIVMRTVRKTVDTGRTVVCTIHQPSIDIFEAFDELFLMKRGGEEIYVGPLGQNSSKLIEYFEGIEGISKIKDGYNPATWMLEVTSTTQEEMLGIDFSEIYKRSELYQRNKELIQDLSTPTPGSTDLHFPTQYSRSFFTQCIACLWKHKLSYWRNPSYTAVRLLFTIIIALLFGTMFWDLGRKTKKEQDLFNAVGSMYAAVLYIGIQNSGCVQPVVVVERTVFYRERAAGMYSGFPYAFGQVAIELPYILVQTLVYGVLVYSMIGFEWTVAKFIWYLFFMYFTLLYFTFFGMMAVGLTPNESIAAIISPAIYNAWNLFSGYLIPRPKIPVWWRWYCWICPVAWTLYGLVASQFGNIQTKLDGKDQTVAQFITEYYGFHHDLLWLVAVVHVVFTVMFAFLFSFAIMKFNFQRR.

Residues 162-435 enclose the ABC transporter 1 domain; that stretch reads GNALHISPTR…FELMGFRCPQ (274 aa). 195–202 serves as a coordination point for ATP; that stretch reads GPPGSGKT. An ABC transmembrane type-2 1 domain is found at 513 to 725; it reads ALLKANIDRE…AQNAISTNEF (213 aa). The next 6 membrane-spanning stretches (helical) occupy residues 531 to 551, 563 to 583, 618 to 638, 650 to 670, 674 to 694, and 760 to 780; these read FVYI…MTTF, GTIY…NGFA, IPVT…VVGF, LLLV…AGIG, VVSQ…GGFI, and IGFG…TVAL. The segment at 809 to 835 is disordered; it reads ILDSCEEKKSRKKEQSQSVNQKHWNNT. The segment covering 813–823 has biased composition (basic and acidic residues); it reads CEEKKSRKKEQ. One can recognise an ABC transporter 2 domain in the interval 853–1105; the sequence is LSFNDIKYSV…KLIEYFEGIE (253 aa). 898 to 905 contacts ATP; it reads GVSGAGKT. The region spanning 1178-1392 is the ABC transmembrane type-2 2 domain; the sequence is TQCIACLWKH…TLYGLVASQF (215 aa). 7 helical membrane passes run 1197-1217, 1237-1257, 1285-1305, 1312-1332, 1342-1362, 1373-1393, and 1423-1443; these read YTAV…TMFW, YAAV…VVVV, LPYI…MIGF, FIWY…FGMM, IAAI…GYLI, WYCW…SQFG, and LVAV…SFAI.

This sequence belongs to the ABC transporter superfamily. ABCG family. PDR (TC 3.A.1.205) subfamily.

It is found in the membrane. May be a general defense protein. The chain is ABC transporter G family member 32 from Oryza sativa subsp. japonica (Rice).